Here is a 1958-residue protein sequence, read N- to C-terminus: Echinoderm microtubule-associated protein-like 6 (1958 aa).

WD repeat units follow at residues 59–100 (GHND…TVSI), 104–145 (VHTH…LLAS), 148–187 (GHSD…LTAK), 195–233 (GDLQ…RTIQ), 235–273 (AHSA…TKID), 280–321 (GYKG…LILQ), 323–362 (HCEG…LIAR), 364–403 (NMEE…EVVH), 406–445 (DRKE…KKIG), and 561–601 (GHSA…VSNG). The tract at residues 604-627 (ETTPQEGGADSYSEESDSDFSDVP) is disordered. Residues 615 to 627 (YSEESDSDFSDVP) show a composition bias toward acidic residues. 10 WD repeats span residues 725–766 (GHDD…CLSL), 770–811 (HHQR…KIAT), 814–853 (GHKD…FTSK), 861–900 (GKLE…KTVK), 901–940 (AHDG…KTYA), 996–1035 (HMEG…RMLA), 1038–1077 (KLKK…DMLS), 1080–1120 (HRKE…RVGI), 1191–1230 (SDVT…QHAR), and 1236–1276 (GHSA…TQES). A compositionally biased stretch (basic and acidic residues) spans 1322 to 1337 (KPHQQLKEVSMEERPP). The disordered stretch occupies residues 1322 to 1352 (KPHQQLKEVSMEERPPVSRAAPQPEKLQKNN). 10 WD repeats span residues 1412–1456 (EHTD…TLSM), 1460–1501 (FHTK…KVAS), 1504–1543 (GHLE…LLYK), 1553–1591 (AKMQ…RLVA), 1593–1638 (AHTG…CRAF), 1685–1724 (HMEG…LLNK), 1726–1767 (NLGH…GKKR), 1768–1807 (DRKS…SLNR), 1880–1919 (ADKA…KFAK), and 1925–1958 (GHSA…WRCL).

The protein belongs to the WD repeat EMAP family.

It is found in the cytoplasm. It localises to the cytoskeleton. Its function is as follows. May modify the assembly dynamics of microtubules, such that microtubules are slightly longer, but more dynamic. This is Echinoderm microtubule-associated protein-like 6 (Eml6) from Mus musculus (Mouse).